A 381-amino-acid chain; its full sequence is Creatine kinase B-type (381 aa).

Ser4 is modified (phosphoserine). The region spanning 11-98 is the Phosphagen kinase N-terminal domain; the sequence is KLRFPAEDEF…FDPIIEDRHG (88 aa). Thr35 is subject to Phosphothreonine. Residue Lys45 forms a Glycyl lysine isopeptide (Lys-Gly) (interchain with G-Cter in ubiquitin) linkage. Val72 contributes to the creatine binding site. The span at 96–110 shows a compositional bias: basic and acidic residues; that stretch reads RHGGYKPSDEHKTDL. The tract at residues 96–122 is disordered; sequence RHGGYKPSDEHKTDLNPDNLQGGDDLD. Residues Lys101 and Lys107 each participate in a glycyl lysine isopeptide (Lys-Gly) (interchain with G-Cter in ubiquitin) cross-link. Position 125 is a phosphotyrosine (Tyr125). The 243-residue stretch at 125 to 367 folds into the Phosphagen kinase C-terminal domain; that stretch reads YVLSSRVRTG…KLLIEMEQRL (243 aa). ATP is bound by residues 128–132, Arg130, Arg132, and His191; that span reads SSRVR. Residues 130 to 138 form an internal MTS-like signal region; that stretch reads RVRTGRSIR. Ser199 bears the Phosphoserine mark. Glu232 provides a ligand contact to creatine. ATP is bound at residue Arg236. 3'-nitrotyrosine is present on Tyr269. A creatine-binding site is contributed by Ser285. ATP is bound at residue Arg292. Position 309 is a phosphoserine (Ser309). ATP contacts are provided by residues Arg320, 320 to 325, and Asp335; that span reads RGTGGV. Thr322 is subject to Phosphothreonine. A Glycyl lysine isopeptide (Lys-Gly) (interchain with G-Cter in ubiquitin) cross-link involves residue Lys381.

Belongs to the ATP:guanido phosphotransferase family. As to quaternary structure, dimer of identical or non-identical chains, which can be either B (brain type) or M (muscle type). With MM being the major form in skeletal muscle and myocardium, MB existing in myocardium, and BB existing in many tissues, especially brain. Interacts with SLC12A6 (via C-terminus); the interaction may be required for SLC12A6 potassium-chloride cotransport activity. In terms of processing, ubiquitinated by the ECS(ASB9) complex, leading to its degradation by the proteasome.

The protein resides in the cytoplasm. Its subcellular location is the cytosol. It is found in the mitochondrion. The protein localises to the cell membrane. The catalysed reaction is creatine + ATP = N-phosphocreatine + ADP + H(+). Its function is as follows. Reversibly catalyzes the transfer of phosphate between ATP and various phosphogens (e.g. creatine phosphate). Creatine kinase isoenzymes play a central role in energy transduction in tissues with large, fluctuating energy demands, such as skeletal muscle, heart, brain and spermatozoa. Acts as a key regulator of adaptive thermogenesis as part of the futile creatine cycle: localizes to the mitochondria of thermogenic fat cells and acts by mediating phosphorylation of creatine to initiate a futile cycle of creatine phosphorylation and dephosphorylation. During the futile creatine cycle, creatine and N-phosphocreatine are in a futile cycle, which dissipates the high energy charge of N-phosphocreatine as heat without performing any mechanical or chemical work. In Homo sapiens (Human), this protein is Creatine kinase B-type.